Reading from the N-terminus, the 348-residue chain is Benzoate 1,2-dioxygenase electron transfer component (348 aa).

The 96-residue stretch at 14 to 109 folds into the 2Fe-2S ferredoxin-type domain; it reads HQVALQFEDG…DAVFQIQASS (96 aa). C51, C56, C59, and C93 together coordinate [2Fe-2S] cluster. Positions 111 to 348 are ferredoxin-reductase; it reads VCKTKIHHFE…NFLFEKFSAN (238 aa). The FAD-binding FR-type domain maps to 116-217; the sequence is IHHFEGTLAR…TGPFGSFYLR (102 aa).

This sequence belongs to the bacterial ring-hydroxylating dioxygenase ferredoxin reductase family. This dioxygenase system consists of three proteins: the two subunits of the hydroxylase component (BenA and BenB), and an electron transfer component (BenC). Requires FAD as cofactor. The cofactor is [2Fe-2S] cluster.

The catalysed reaction is 2 reduced [2Fe-2S]-[ferredoxin] + NAD(+) + H(+) = 2 oxidized [2Fe-2S]-[ferredoxin] + NADH. Its pathway is xenobiotic degradation; toluene degradation. In terms of biological role, electron transfer component of benzoate 1,2-dioxygenase system. This chain is Benzoate 1,2-dioxygenase electron transfer component (benC), found in Acinetobacter baylyi (strain ATCC 33305 / BD413 / ADP1).